The chain runs to 566 residues: Developmental regulatory protein wetA (566 aa).

Disordered regions lie at residues valine 116–proline 174, serine 232–leucine 316, alanine 334–serine 364, serine 381–alanine 400, and proline 429–lysine 542. Composition is skewed to polar residues over residues glutamine 165 to proline 174 and alanine 269 to proline 291. Positions serine 298 to leucine 316 are enriched in low complexity. Polar residues-rich tracts occupy residues proline 347 to serine 364 and serine 381 to threonine 398. A compositionally biased stretch (low complexity) spans serine 435–proline 448. Polar residues predominate over residues threonine 449 to threonine 462. A compositionally biased stretch (basic residues) spans serine 463–lysine 473. The segment covering proline 482 to serine 500 has biased composition (low complexity). Residues leucine 501–asparagine 511 are compositionally biased toward polar residues.

The protein belongs to the wetA family.

BrlA, abaA and wetA are pivotal regulators of conidiophore development and conidium maturation. They act individually and together to regulate their own expression and that of numerous other sporulation-specific genes. Plays an essential role in the completion of conidial maturation and is essential for trehalose biogenesis in conidia. Negatively regulates expression of the melanin biosynthetic gene cluster. Also plays an a role in the early phase of fungal growth including proper hyphal branching. The sequence is that of Developmental regulatory protein wetA from Aspergillus fumigatus (strain ATCC MYA-4609 / CBS 101355 / FGSC A1100 / Af293) (Neosartorya fumigata).